The following is a 408-amino-acid chain: Arginine biosynthesis bifunctional protein ArgJ (408 aa).

Substrate is bound by residues threonine 158, lysine 184, threonine 195, glutamate 281, asparagine 403, and threonine 408. Threonine 195 functions as the Nucleophile in the catalytic mechanism.

This sequence belongs to the ArgJ family. As to quaternary structure, heterotetramer of two alpha and two beta chains.

The protein localises to the cytoplasm. The catalysed reaction is N(2)-acetyl-L-ornithine + L-glutamate = N-acetyl-L-glutamate + L-ornithine. It carries out the reaction L-glutamate + acetyl-CoA = N-acetyl-L-glutamate + CoA + H(+). The protein operates within amino-acid biosynthesis; L-arginine biosynthesis; L-ornithine and N-acetyl-L-glutamate from L-glutamate and N(2)-acetyl-L-ornithine (cyclic): step 1/1. It participates in amino-acid biosynthesis; L-arginine biosynthesis; N(2)-acetyl-L-ornithine from L-glutamate: step 1/4. Its function is as follows. Catalyzes two activities which are involved in the cyclic version of arginine biosynthesis: the synthesis of N-acetylglutamate from glutamate and acetyl-CoA as the acetyl donor, and of ornithine by transacetylation between N(2)-acetylornithine and glutamate. This Shouchella clausii (strain KSM-K16) (Alkalihalobacillus clausii) protein is Arginine biosynthesis bifunctional protein ArgJ.